Reading from the N-terminus, the 211-residue chain is Regulator of G-protein signaling 2 (211 aa).

2 disordered regions span residues 14-33 (RPMD…REKM) and 49-68 (LQNS…KQQA). The tract at residues 32–66 (KMKRTLLKDWKTRLSYFLQNSSTPGKPKTGKKSKQ) is necessary for membrane association. Residues 79–116 (LWSEAFDELLASKYGLAAFRAFLKSEFCEENIEFWLAC) are necessary to inhibit protein synthesis. Positions 83 to 199 (AFDELLASKY…LESEFYQDLC (117 aa)) constitute an RGS domain.

As to quaternary structure, interacts with GNAQ. Does not interact with GNAI1 and GNAI3. Interacts with EIF2B5. Interacts with PRKG1 (isoform alpha). In terms of processing, phosphorylated by protein kinase C. Phosphorylation by PRKG1 leads to activation of RGS2 activity. Expressed in acute myelogenous leukemia (AML) and in acute lymphoblastic leukemia (ALL).

The protein resides in the cell membrane. Its subcellular location is the cytoplasm. It localises to the nucleus. The protein localises to the nucleolus. It is found in the mitochondrion. Regulates G protein-coupled receptor signaling cascades. Inhibits signal transduction by increasing the GTPase activity of G protein alpha subunits, thereby driving them into their inactive GDP-bound form. It is involved in the negative regulation of the angiotensin-activated signaling pathway. Plays a role in the regulation of blood pressure in response to signaling via G protein-coupled receptors and GNAQ. Plays a role in regulating the constriction and relaxation of vascular smooth muscle. Binds EIF2B5 and blocks its activity, thereby inhibiting the translation of mRNA into protein. This is Regulator of G-protein signaling 2 (RGS2) from Homo sapiens (Human).